Reading from the N-terminus, the 538-residue chain is Casein kinase I homolog 1 (538 aa).

Residues 39–61 (SPARSSMTATTAANSNSNSSRDD) are disordered. Positions 41-57 (ARSSMTATTAANSNSNS) are enriched in low complexity. The Protein kinase domain occupies 69 to 353 (YKIGKKIGEG…ETADGQYDWM (285 aa)). Residues 75-83 (IGEGSFGVL) and Lys98 contribute to the ATP site. Asp188 serves as the catalytic Proton acceptor. 2 disordered regions span residues 366–428 (NKKP…KPKL) and 474–527 (QQQL…LAAS). Low complexity-rich tracts occupy residues 391–410 (QLQMQQLQMQQLQQQQQQQQ) and 474–498 (QQQLRATGQPPSQPQAQTQSQQFGA). A phosphoserine mark is found at Ser522, Ser523, and Ser527. Residues Cys537 and Cys538 are each lipidated (S-palmitoyl cysteine).

This sequence belongs to the protein kinase superfamily. CK1 Ser/Thr protein kinase family. Casein kinase I subfamily. Post-translationally, palmitoylated by AKR1.

The protein localises to the cell membrane. It is found in the mitochondrion membrane. The enzyme catalyses L-seryl-[protein] + ATP = O-phospho-L-seryl-[protein] + ADP + H(+). The catalysed reaction is L-threonyl-[protein] + ATP = O-phospho-L-threonyl-[protein] + ADP + H(+). Its function is as follows. Casein kinases are operationally defined by their preferential utilization of acidic proteins such as caseins as substrates. The sequence is that of Casein kinase I homolog 1 (YCK1) from Saccharomyces cerevisiae (strain ATCC 204508 / S288c) (Baker's yeast).